Reading from the N-terminus, the 323-residue chain is GDP-mannose 4,6-dehydratase (323 aa).

Residues 11–14, Arg-36, 59–60, and 81–85 each bind NADP(+); these read TGQD, DM, and LAAQS. Thr-126 is an active-site residue. Active-site nucleophile residues include Glu-128 and Tyr-150. NADP(+) contacts are provided by Lys-154, His-180, and Arg-185.

Belongs to the NAD(P)-dependent epimerase/dehydratase family. GDP-mannose 4,6-dehydratase subfamily. Homotetramer. Requires NADP(+) as cofactor.

The catalysed reaction is GDP-alpha-D-mannose = GDP-4-dehydro-alpha-D-rhamnose + H2O. It participates in bacterial outer membrane biogenesis; lipopolysaccharide biosynthesis. In terms of biological role, catalyzes the conversion of GDP-D-mannose to GDP-4-dehydro-6-deoxy-D-mannose. The sequence is that of GDP-mannose 4,6-dehydratase from Pseudomonas aeruginosa (strain ATCC 15692 / DSM 22644 / CIP 104116 / JCM 14847 / LMG 12228 / 1C / PRS 101 / PAO1).